A 214-amino-acid polypeptide reads, in one-letter code: Charged multivesicular body protein 2b-B (214 aa).

Residues 25–55 (QRAITRDRAALEKQEKQLEMEIKKMAKTGNK) are a coiled coil. The tract at residues 178 to 200 (MAKAPSAAKGLPSTSAAKSKGIS) is disordered. The MIT-interacting motif motif lies at 202-212 (EEIERQLKALG).

It belongs to the SNF7 family. In terms of assembly, probable core component of the endosomal sorting required for transport complex III (ESCRT-III). ESCRT-III components are thought to multimerize to form a flat lattice on the perimeter membrane of the endosome.

Its subcellular location is the cytoplasm. The protein resides in the cytosol. The protein localises to the late endosome membrane. Probable core component of the endosomal sorting required for transport complex III (ESCRT-III) which is involved in multivesicular bodies (MVBs) formation and sorting of endosomal cargo proteins into MVBs. MVBs contain intraluminal vesicles (ILVs) that are generated by invagination and scission from the limiting membrane of the endosome and mostly are delivered to lysosomes enabling degradation of membrane proteins, such as stimulated growth factor receptors, lysosomal enzymes and lipids. The protein is Charged multivesicular body protein 2b-B (chmp2b-b) of Xenopus laevis (African clawed frog).